The primary structure comprises 532 residues: MDSLQLWQRYCDWLYYHPELEIFVDISRIRFTPAQVEALRPLFARAFAEMQALEAGAIANPDEGRQVGHYWLRAPELAPTAEIRQAIQDCVEQVESFAKKIHCGTIPASGGGRFTELLWIGIGGSALGPQFVAEALAPLQPPLNIHFIDNTDPDGFDRVLGRLAGKLGQTLVVVTSKSGNTPEPRNALVEVELAYRKAGIPFSAHAVAITGPGSQLEQQARQEGWLAVFPIFDWVGGRTSETSAVGLLPAALQGIDIRALLAGAATMDKATRVPHLERNPAALLAMAWYIVGEGRGRKDMVVLPYKDRLALFSRYLQQLVMESLGKSHDLQGNRVEQGLTVYGNKGTTDQHAYVQQLRDGLNNFFVTFIEVLQDREPGIPSPFVEPEVTSGDYLDGLLQGTRQALYENGRDSVTITLPRVDARSVGALIALYERAVGLYASLIQVNAYHQPGVEAGKKAASAVLQLQRQVLEVMREQKGSLTLPQLAEKLSCPERIETLYWIVRHLQANGRSLVLVGDPGRPLELSIQPRPA.

The Proton donor role is filled by glutamate 322. Residues histidine 351 and lysine 457 contribute to the active site.

Belongs to the GPI family.

The protein localises to the cytoplasm. The catalysed reaction is alpha-D-glucose 6-phosphate = beta-D-fructose 6-phosphate. It participates in carbohydrate biosynthesis; gluconeogenesis. It functions in the pathway carbohydrate degradation; glycolysis; D-glyceraldehyde 3-phosphate and glycerone phosphate from D-glucose: step 2/4. Functionally, catalyzes the reversible isomerization of glucose-6-phosphate to fructose-6-phosphate. The protein is Glucose-6-phosphate isomerase of Synechococcus sp. (strain JA-3-3Ab) (Cyanobacteria bacterium Yellowstone A-Prime).